A 339-amino-acid polypeptide reads, in one-letter code: Longiborneol synthase CLM1 (339 aa).

A compositionally biased stretch (polar residues) spans 1–17; the sequence is MLATPTLSNFDKPSLPS. Residues 1–21 form a disordered region; sequence MLATPTLSNFDKPSLPSSEGG. D112, N241, S245, and E249 together coordinate Mg(2+). An NDXXSXXXE magnesium-binding motif motif is present at residues 241-249; the sequence is NDVLSFYKE.

Belongs to the trichodiene synthase family. Requires Mg(2+) as cofactor. The cofactor is Mn(2+).

It carries out the reaction (2E,6E)-farnesyl diphosphate + H2O = (-)-longiborneol + diphosphate. It participates in mycotoxin biosynthesis. Functionally, terpene cyclase involved in the biosynthesis of culmorin, a tricyclic sesquiterpene diol reported to have antifungal activity and some phytotoxicity to wheat coleoptile tissue, contributing to Fusarium head blight disease. The terpene cyclase CLM1 is responsible for the cyclization of farnesyl diphosphate into the intermediate longiborneol. Longiborneol is then hydroxylated in a regio- and endo-stereoselective manner at position C-11 by the cytochrome P450 monooxygenase CLM2 to produce culmorin. Additional non-specific oxygenases are also able to hydroxylate longiborneol at other sites than C-11 leading to 3-hydroxylongiborneol, 5-hydroxylongiborneol, 12-hydroxylongiborneol and 15-hydroxylongiborneol. Moreover, another oxygenase capable of installing a C-11 exo-hydroxy group in longiborneol can also yield 11-epi-acetylculmorin. The production of these longiborneol derivatives is dwarfed by the high abundance of culmorin, suggesting that CLM2 displays superior enzymatic activity to the unidentified, possibly promiscuous, additional oxygenases. This is Longiborneol synthase CLM1 from Gibberella zeae (strain ATCC MYA-4620 / CBS 123657 / FGSC 9075 / NRRL 31084 / PH-1) (Wheat head blight fungus).